The chain runs to 243 residues: Protein IN2-1 (243 aa).

The interval 1–26 (MAAAAGPSSSVKESLPPALGSTSQPP) is disordered. One can recognise a GST N-terminal domain in the interval 31–112 (GTTRLYICYF…YIDSNFDGPA (82 aa)). Glutathione is bound by residues lysine 70, valine 84, and 96–97 (ES). In terms of domain architecture, GST C-terminal spans 109–240 (DGPALLPEDA…FLLDLAKSHL (132 aa)).

This sequence belongs to the GST superfamily. HSP26 family. As to expression, leaves and roots. It is more strongly induced in the leaves relative to the roots.

In Zea mays (Maize), this protein is Protein IN2-1 (IN2-1).